Reading from the N-terminus, the 587-residue chain is Protein POF1B (587 aa).

Positions 331–529 (STFSNIREEL…EELSKLRQEI (199 aa)) form a coiled coil.

In terms of assembly, interacts with nonmuscle actin. As to expression, expression absent in adult ovary.

The protein resides in the cell junction. It localises to the tight junction. In terms of biological role, plays a key role in the organization of epithelial monolayers by regulating the actin cytoskeleton. May be involved in ovary development. In Mus musculus (Mouse), this protein is Protein POF1B (Pof1b).